The chain runs to 58 residues: MGIKILEKCVGCGNCVVFCPRRAIKTYGVAIVDENKCSNCGICARYCPINAIKVDTSL.

4Fe-4S ferredoxin-type domains follow at residues 2–27 (GIKILEKCVGCGNCVVFCPRRAIKTY) and 28–57 (GVAIVDENKCSNCGICARYCPINAIKVDTS). Positions 9, 12, 15, 19, 37, 40, 43, and 47 each coordinate [4Fe-4S] cluster.

Requires [4Fe-4S] cluster as cofactor.

In terms of biological role, ferredoxins are iron-sulfur proteins that transfer electrons probably in the CO-dehydrogenase complex. This is an uncharacterized protein from Methanocaldococcus jannaschii (strain ATCC 43067 / DSM 2661 / JAL-1 / JCM 10045 / NBRC 100440) (Methanococcus jannaschii).